We begin with the raw amino-acid sequence, 445 residues long: Rab GDP dissociation inhibitor beta (445 aa).

M1 bears the N-acetylmethionine mark. K57 is modified (N6-succinyllysine). At K112 the chain carries N6-acetyllysine. S130 is subject to Phosphoserine. An N6-acetyllysine modification is found at K269. Residue S382 is modified to Phosphoserine.

It belongs to the Rab GDI family. Interacts with RHOH. Interacts with the GDP-bound inactive forms of RAB3A, RAB3B, RAB3C, RAB5A, RAB5B, RAB5C, RAB8A, RAB8B, RAB10, RAB12, RAB35, and RAB43; binds RAB3D to a lesser extent. Interacts with DZIP1; this interaction negatively regulates the interaction of GDI2 with GDP-bound RAB8A. In terms of tissue distribution, ubiquitously expressed.

It is found in the cytoplasm. Its subcellular location is the membrane. It localises to the golgi apparatus. The protein resides in the trans-Golgi network. GDP-dissociation inhibitor preventing the GDP to GTP exchange of most Rab proteins. By keeping these small GTPases in their inactive GDP-bound form regulates intracellular membrane trafficking. Negatively regulates protein transport to the cilium and ciliogenesis through the inhibition of RAB8A. This is Rab GDP dissociation inhibitor beta (Gdi2) from Rattus norvegicus (Rat).